A 486-amino-acid chain; its full sequence is Mitogen-activated protein kinase 17 (486 aa).

The Protein kinase domain maps to 16-307 (YQIQEVVGKG…AEEALADPYF (292 aa)). ATP-binding positions include 22 to 30 (VGKGSYGVV) and Lys45. Asp142 (proton acceptor) is an active-site residue. A Phosphothreonine modification is found at Thr178. The TXY motif lies at 178 to 180 (TDY). Tyr180 carries the phosphotyrosine modification. Thr183 is modified (phosphothreonine). The tract at residues 386–455 (EEHNDDEEEH…LSSQKASQVD (70 aa)) is disordered. Over residues 422 to 433 (SVHAQSSSASVV) the composition is skewed to low complexity. A compositionally biased stretch (polar residues) spans 440 to 452 (PNTATGLSSQKAS).

The protein belongs to the protein kinase superfamily. CMGC Ser/Thr protein kinase family. MAP kinase subfamily. Post-translationally, dually phosphorylated on Thr-178 and Tyr-180, which activates the enzyme.

The enzyme catalyses L-seryl-[protein] + ATP = O-phospho-L-seryl-[protein] + ADP + H(+). It carries out the reaction L-threonyl-[protein] + ATP = O-phospho-L-threonyl-[protein] + ADP + H(+). Activated by threonine and tyrosine phosphorylation. This chain is Mitogen-activated protein kinase 17 (MPK17), found in Arabidopsis thaliana (Mouse-ear cress).